The following is a 324-amino-acid chain: Acetyl-coenzyme A carboxylase carboxyl transferase subunit alpha (324 aa).

The region spanning 44 to 297 (LEERAKQLRY…KAALLRNLAE (254 aa)) is the CoA carboxyltransferase C-terminal domain.

It belongs to the AccA family. In terms of assembly, acetyl-CoA carboxylase is a heterohexamer composed of biotin carboxyl carrier protein (AccB), biotin carboxylase (AccC) and two subunits each of ACCase subunit alpha (AccA) and ACCase subunit beta (AccD).

It is found in the cytoplasm. It catalyses the reaction N(6)-carboxybiotinyl-L-lysyl-[protein] + acetyl-CoA = N(6)-biotinyl-L-lysyl-[protein] + malonyl-CoA. The protein operates within lipid metabolism; malonyl-CoA biosynthesis; malonyl-CoA from acetyl-CoA: step 1/1. Its function is as follows. Component of the acetyl coenzyme A carboxylase (ACC) complex. First, biotin carboxylase catalyzes the carboxylation of biotin on its carrier protein (BCCP) and then the CO(2) group is transferred by the carboxyltransferase to acetyl-CoA to form malonyl-CoA. This chain is Acetyl-coenzyme A carboxylase carboxyl transferase subunit alpha, found in Thermosynechococcus vestitus (strain NIES-2133 / IAM M-273 / BP-1).